A 153-amino-acid polypeptide reads, in one-letter code: ORM1-like protein 1 (153 aa).

Residues 1–27 (MNVGVAHSEVNPNTRVMNSRGIWLTYA) lie on the Cytoplasmic side of the membrane. 2 helical membrane passes run 28–46 (LGVG…FSVP) and 47–64 (VVWT…YVFM). Topologically, residues 65 to 105 (HAVKGTPFETPDQGKARLLTHWEQLDYGVQFTSSRKFFTIS) are cytoplasmic. The next 2 membrane-spanning stretches (helical) occupy residues 106-123 (PIIL…DTAH) and 124-140 (FVIN…PKLP). Residues 141–153 (QLHGVRIFGINKY) lie on the Cytoplasmic side of the membrane.

The protein belongs to the ORM family. As to quaternary structure, ceramide-sensitive subunit of the serine palmitoyltransferase (SPT) complex, which is also composed of SPTLC1, SPTLC2/3 and SPTSSA/B.

The protein resides in the endoplasmic reticulum membrane. Plays an essential role in the homeostatic regulation of sphingolipid de novo biosynthesis by modulating the activity of the serine palmitoyltransferase (SPT) in response to ceramide levels. When complexed to SPT, the binding of ceramides to its N-terminus stabilizes a conformation that block SPT substrate entry, hence preventing SPT catalytic activity. Through this mechanism, maintains ceramide levels at sufficient concentrations for the production of complex sphingolipids, but which prevents the accumulation of ceramides to levels that trigger apoptosis. This is ORM1-like protein 1 (ormdl1) from Danio rerio (Zebrafish).